The following is a 314-amino-acid chain: Phospholipid phosphatase-related protein type 5 (314 aa).

A run of 6 helical transmembrane segments spans residues 5 to 25 (FSLT…VMLA), 61 to 81 (IPPV…IIVG), 120 to 140 (FLGI…AGQV), 194 to 214 (AALS…TIKA), 223 to 243 (VLCL…VAEY), and 250 to 270 (VIAG…CVVN).

Belongs to the PA-phosphatase related phosphoesterase family.

The protein localises to the cell membrane. In terms of biological role, induces filopodia formation and promotes neurite growth. The chain is Phospholipid phosphatase-related protein type 5 from Xenopus laevis (African clawed frog).